Reading from the N-terminus, the 616-residue chain is Matrix metalloproteinase-21 (616 aa).

Positions 1–22 are cleaved as a signal peptide; the sequence is MPTAPALGALLLLLGALTPGHQ. Residues 23–192 constitute a propeptide that is removed on maturation; it reads EKLFHSRDHS…TSTSKIRKKR (170 aa). The Cysteine switch motif lies at 139–146; sequence PRCGVPDN. Cys-141 is a binding site for Zn(2+). Residues 157-186 are disordered; that stretch reads SNSNNVTEKASGKSLNTTTNQNPENGTSTS. Residues Asn-161, Asn-172, and Asn-181 are each glycosylated (N-linked (GlcNAc...) asparagine). Position 329 (His-329) interacts with Zn(2+). Glu-330 is a catalytic residue. Zn(2+)-binding residues include His-333 and His-339. An intrachain disulfide couples Cys-375 to Cys-606. 4 Hemopexin repeats span residues 376-435, 437-493, 494-542, and 549-605; these read EGSF…WHGI, AEGI…FPKI, PSPI…FPAV, and FGNI…WTDI. Asn-418 is a glycosylation site (N-linked (GlcNAc...) asparagine). The N-linked (GlcNAc...) asparagine glycan is linked to Asn-597.

The protein belongs to the peptidase M10A family. Requires Zn(2+) as cofactor. It depends on Ca(2+) as a cofactor. Post-translationally, the precursor is cleaved by a furin endopeptidase.

It localises to the secreted. Functionally, may play a role in gastrulation-related cell movement. Plays a specialized role in the generation of left-right asymmetry during embryogenesis. May act as a negative regulator of the NOTCH-signaling pathway. This Cynops pyrrhogaster (Japanese fire-bellied newt) protein is Matrix metalloproteinase-21 (MMP21).